A 65-amino-acid chain; its full sequence is Large ribosomal subunit protein bL35 (65 aa).

Residues 1-16 are compositionally biased toward basic residues; the sequence is MPKQKTHRASAKRFKR. Residues 1–21 are disordered; sequence MPKQKTHRASAKRFKRTGSGG.

The protein belongs to the bacterial ribosomal protein bL35 family.

This Streptococcus pyogenes serotype M18 (strain MGAS8232) protein is Large ribosomal subunit protein bL35.